The following is a 541-amino-acid chain: Chaperonin GroEL 2 (541 aa).

Residues 29–32 (TLGP), 86–90 (DGTTT), Gly-413, 476–478 (NAA), and Asp-492 each bind ATP.

The protein belongs to the chaperonin (HSP60) family. Forms a cylinder of 14 subunits composed of two heptameric rings stacked back-to-back. Interacts with the co-chaperonin GroES.

The protein resides in the secreted. It localises to the capsule. The protein localises to the cell surface. Its subcellular location is the cell wall. It catalyses the reaction ATP + H2O + a folded polypeptide = ADP + phosphate + an unfolded polypeptide.. Its function is as follows. Together with its co-chaperonin GroES, plays an essential role in assisting protein folding. The GroEL-GroES system forms a nano-cage that allows encapsulation of the non-native substrate proteins and provides a physical environment optimized to promote and accelerate protein folding. In Mycolicibacterium paratuberculosis (strain ATCC BAA-968 / K-10) (Mycobacterium paratuberculosis), this protein is Chaperonin GroEL 2.